A 211-amino-acid polypeptide reads, in one-letter code: Uridine kinase (211 aa).

Residue 15–22 (GGSGSGKT) participates in ATP binding.

Belongs to the uridine kinase family.

It is found in the cytoplasm. It carries out the reaction uridine + ATP = UMP + ADP + H(+). The enzyme catalyses cytidine + ATP = CMP + ADP + H(+). The protein operates within pyrimidine metabolism; CTP biosynthesis via salvage pathway; CTP from cytidine: step 1/3. It participates in pyrimidine metabolism; UMP biosynthesis via salvage pathway; UMP from uridine: step 1/1. In Latilactobacillus sakei subsp. sakei (strain 23K) (Lactobacillus sakei subsp. sakei), this protein is Uridine kinase.